The chain runs to 585 residues: Arginine--tRNA ligase (585 aa).

The short motif at 131–141 is the 'HIGH' region element; that stretch reads ANPTGPMHVGH.

It belongs to the class-I aminoacyl-tRNA synthetase family. As to quaternary structure, monomer.

Its subcellular location is the cytoplasm. The enzyme catalyses tRNA(Arg) + L-arginine + ATP = L-arginyl-tRNA(Arg) + AMP + diphosphate. This is Arginine--tRNA ligase from Brucella anthropi (strain ATCC 49188 / DSM 6882 / CCUG 24695 / JCM 21032 / LMG 3331 / NBRC 15819 / NCTC 12168 / Alc 37) (Ochrobactrum anthropi).